The chain runs to 390 residues: Chorismate synthase 2 (390 aa).

Residues arginine 39 and arginine 45 each contribute to the NADP(+) site. FMN contacts are provided by residues 132-134 (RSS), 253-254 (NA), glycine 298, 313-317 (KPIPT), and arginine 339.

This sequence belongs to the chorismate synthase family. As to quaternary structure, homotetramer. FMNH2 is required as a cofactor.

The enzyme catalyses 5-O-(1-carboxyvinyl)-3-phosphoshikimate = chorismate + phosphate. It functions in the pathway metabolic intermediate biosynthesis; chorismate biosynthesis; chorismate from D-erythrose 4-phosphate and phosphoenolpyruvate: step 7/7. In terms of biological role, catalyzes the anti-1,4-elimination of the C-3 phosphate and the C-6 proR hydrogen from 5-enolpyruvylshikimate-3-phosphate (EPSP) to yield chorismate, which is the branch point compound that serves as the starting substrate for the three terminal pathways of aromatic amino acid biosynthesis. This reaction introduces a second double bond into the aromatic ring system. The chain is Chorismate synthase 2 from Bacillus cereus (strain ATCC 14579 / DSM 31 / CCUG 7414 / JCM 2152 / NBRC 15305 / NCIMB 9373 / NCTC 2599 / NRRL B-3711).